Consider the following 185-residue polypeptide: Ribosome-recycling factor (185 aa).

The segment at 141–160 is disordered; the sequence is RIQKDGEAGEDEVGRAEKEL.

The protein belongs to the RRF family.

Its subcellular location is the cytoplasm. Its function is as follows. Responsible for the release of ribosomes from messenger RNA at the termination of protein biosynthesis. May increase the efficiency of translation by recycling ribosomes from one round of translation to another. The polypeptide is Ribosome-recycling factor (Rhodococcus jostii (strain RHA1)).